The following is a 333-amino-acid chain: tRNA N6-adenosine threonylcarbamoyltransferase (333 aa).

The Fe cation site is built by His-111 and His-115. Substrate is bound by residues 134–138, Asp-167, Gly-180, Asp-184, and Asn-273; that span reads VVSGG. Asp-302 contributes to the Fe cation binding site.

This sequence belongs to the KAE1 / TsaD family. Fe(2+) is required as a cofactor.

The protein localises to the cytoplasm. The catalysed reaction is L-threonylcarbamoyladenylate + adenosine(37) in tRNA = N(6)-L-threonylcarbamoyladenosine(37) in tRNA + AMP + H(+). Required for the formation of a threonylcarbamoyl group on adenosine at position 37 (t(6)A37) in tRNAs that read codons beginning with adenine. Is involved in the transfer of the threonylcarbamoyl moiety of threonylcarbamoyl-AMP (TC-AMP) to the N6 group of A37, together with TsaE and TsaB. TsaD likely plays a direct catalytic role in this reaction. In Anaeromyxobacter sp. (strain Fw109-5), this protein is tRNA N6-adenosine threonylcarbamoyltransferase.